Here is a 758-residue protein sequence, read N- to C-terminus: POU domain, class 2, transcription factor 1 (758 aa).

Polar residues-rich tracts occupy residues M1–Q10, R19–P30, and V275–P285. 5 disordered regions span residues M1 to G43, A271 to P296, T377 to K398, E450 to S472, and S534 to S573. The 75-residue stretch at E294–E368 folds into the POU-specific domain. The homeobox DNA-binding region spans R395–N454. Residues P455–S472 are compositionally biased toward low complexity.

The protein belongs to the POU transcription factor family. Class-2 subfamily. As to expression, expressed in oocytes (at protein level). Expressed in the tadpole brain (at protein level).

It is found in the cytoplasm. The protein resides in the nucleus. Its function is as follows. Transcription factor that binds to the octamer motif (5'-ATTTGCAT-3') and activates the promoters of the genes of some small nuclear RNAs (snRNA) and histone H2B. In vitro does not bind to variant octamer sequences, such as the H2B octamer 5'-GTTTGCAT-3', although binding has been observed in vivo during early embryogenesis, suggesting that interactions between pou2f1 and other factors might be required for octamer-dependent H2B transcription. Acts downstream of Notch signaling during radial glia formation. May be important for gastrulation, possibly through the regulation of an FGF-type signaling pathway. This chain is POU domain, class 2, transcription factor 1 (pou2f1), found in Xenopus laevis (African clawed frog).